Consider the following 398-residue polypeptide: Cysteine protease ATG4A (398 aa).

Cys77 acts as the Nucleophile in catalysis. Residues Asp279 and His281 contribute to the active site. Residues 393–396 carry the LIR motif; the sequence is FEIL.

This sequence belongs to the peptidase C54 family. In terms of assembly, interacts with ATG9A; the interaction is direct.

The protein resides in the cytoplasm. The catalysed reaction is [protein]-C-terminal L-amino acid-glycyl-phosphatidylethanolamide + H2O = [protein]-C-terminal L-amino acid-glycine + a 1,2-diacyl-sn-glycero-3-phosphoethanolamine. Its activity is regulated as follows. Inhibited by N-ethylmaleimide. Redox-regulated during autophagy since reducing conditions activate ATG4A whereas an oxidizing environment such as the presence of H(2)O(2) inhibits its activity. In terms of biological role, cysteine protease that plays a key role in autophagy by mediating both proteolytic activation and delipidation of ATG8 family proteins. The protease activity is required for proteolytic activation of ATG8 family proteins: cleaves the C-terminal amino acid of ATG8 proteins to reveal a C-terminal glycine. Exposure of the glycine at the C-terminus is essential for ATG8 proteins conjugation to phosphatidylethanolamine (PE) and insertion to membranes, which is necessary for autophagy. Preferred substrate is GABARAPL2 followed by MAP1LC3A and GABARAP. Protease activity is also required to counteract formation of high-molecular weight conjugates of ATG8 proteins (ATG8ylation): acts as a deubiquitinating-like enzyme that removes ATG8 conjugated to other proteins, such as ATG3. In addition to the protease activity, also mediates delipidation of ATG8 family proteins. Catalyzes delipidation of PE-conjugated forms of ATG8 proteins during macroautophagy. Compared to ATG4B, the major protein for proteolytic activation of ATG8 proteins, shows weaker ability to cleave the C-terminal amino acid of ATG8 proteins, while it displays stronger delipidation activity. Involved in phagophore growth during mitophagy independently of its protease activity and of ATG8 proteins: acts by regulating ATG9A trafficking to mitochondria and promoting phagophore-endoplasmic reticulum contacts during the lipid transfer phase of mitophagy. (Microbial infection) Mediates cleavage of an ATG8 protein homolog coded in the genome of cytopathogenic bovine viral diarrhea virus (BVDV). The polypeptide is Cysteine protease ATG4A (Bos taurus (Bovine)).